The primary structure comprises 367 residues: Alanine racemase (367 aa).

The active-site Proton acceptor; specific for D-alanine is the Lys-40. Lys-40 carries the N6-(pyridoxal phosphate)lysine modification. Arg-136 is a binding site for substrate. The active-site Proton acceptor; specific for L-alanine is Tyr-263. Residue Met-310 participates in substrate binding.

This sequence belongs to the alanine racemase family. The cofactor is pyridoxal 5'-phosphate.

The catalysed reaction is L-alanine = D-alanine. The protein operates within amino-acid biosynthesis; D-alanine biosynthesis; D-alanine from L-alanine: step 1/1. In terms of biological role, catalyzes the interconversion of L-alanine and D-alanine. May also act on other amino acids. The sequence is that of Alanine racemase (alr) from Streptococcus pneumoniae (strain Hungary19A-6).